Consider the following 215-residue polypeptide: Adenylate kinase (215 aa).

Residue 10 to 15 (GAGKGT) coordinates ATP. Positions 30–59 (STGDMFRAAMKNNTELGKKAKSFMDNGDLV) are NMP. AMP is bound by residues Thr31, Arg36, 57 to 59 (DLV), 85 to 88 (GFPR), and Gln92. The LID stretch occupies residues 126-163 (GRWICRTCGKTYHEIYNPPKVPGKCDLDGGELYQREDD). Arg127 contributes to the ATP binding site. Residues Cys130 and Cys133 each contribute to the Zn(2+) site. 136-137 (TY) provides a ligand contact to ATP. Zn(2+)-binding residues include Cys150 and Asp153. AMP is bound by residues Arg160 and Arg171. Gln199 is an ATP binding site.

The protein belongs to the adenylate kinase family. Monomer.

It localises to the cytoplasm. It catalyses the reaction AMP + ATP = 2 ADP. Its pathway is purine metabolism; AMP biosynthesis via salvage pathway; AMP from ADP: step 1/1. Its function is as follows. Catalyzes the reversible transfer of the terminal phosphate group between ATP and AMP. Plays an important role in cellular energy homeostasis and in adenine nucleotide metabolism. The chain is Adenylate kinase from Listeria innocua serovar 6a (strain ATCC BAA-680 / CLIP 11262).